The sequence spans 129 residues: D-ribose pyranase (129 aa).

The active-site Proton donor is H20. Substrate-binding positions include D28, H96, and 118 to 120 (YAN).

The protein belongs to the RbsD / FucU family. RbsD subfamily. As to quaternary structure, homodecamer.

It localises to the cytoplasm. It catalyses the reaction beta-D-ribopyranose = beta-D-ribofuranose. Its pathway is carbohydrate metabolism; D-ribose degradation; D-ribose 5-phosphate from beta-D-ribopyranose: step 1/2. Functionally, catalyzes the interconversion of beta-pyran and beta-furan forms of D-ribose. This chain is D-ribose pyranase, found in Streptomyces avermitilis (strain ATCC 31267 / DSM 46492 / JCM 5070 / NBRC 14893 / NCIMB 12804 / NRRL 8165 / MA-4680).